We begin with the raw amino-acid sequence, 595 residues long: Ketol-acid reductoisomerase, chloroplastic (595 aa).

Residues 1–72 (MAATAATTFS…GGGSALSAQM (72 aa)) constitute a chloroplast transit peptide. Positions 108–306 (VRGGRNLFPL…ALGSPFTFAT (199 aa)) constitute a KARI N-terminal Rossmann domain. NADP(+) contacts are provided by residues 129–136 (GVIGWGSQ), 162–167 (RKGSNS), and 201–205 (SDSAQ). H226 is an active-site residue. 2 KARI C-terminal knotted domains span residues 307–455 (TLEQ…RPAG) and 456–592 (DLGP…RPEL). Residues D315, E319, E492, and E496 each coordinate Mg(2+). A substrate-binding site is contributed by S518.

This sequence belongs to the ketol-acid reductoisomerase family. Homodimer. It depends on Mg(2+) as a cofactor.

Its subcellular location is the plastid. The protein localises to the chloroplast. It carries out the reaction (2R)-2,3-dihydroxy-3-methylbutanoate + NADP(+) = (2S)-2-acetolactate + NADPH + H(+). The catalysed reaction is (2R,3R)-2,3-dihydroxy-3-methylpentanoate + NADP(+) = (S)-2-ethyl-2-hydroxy-3-oxobutanoate + NADPH + H(+). It functions in the pathway amino-acid biosynthesis; L-isoleucine biosynthesis; L-isoleucine from 2-oxobutanoate: step 2/4. Its pathway is amino-acid biosynthesis; L-valine biosynthesis; L-valine from pyruvate: step 2/4. The chain is Ketol-acid reductoisomerase, chloroplastic (AHRI) from Spinacia oleracea (Spinach).